The chain runs to 248 residues: Probable transcriptional regulatory protein Nham_3525 (248 aa).

The disordered stretch occupies residues 1–21; the sequence is MAGHSQFKNIMHRKGRQDAQK.

Belongs to the TACO1 family.

The protein resides in the cytoplasm. The polypeptide is Probable transcriptional regulatory protein Nham_3525 (Nitrobacter hamburgensis (strain DSM 10229 / NCIMB 13809 / X14)).